A 599-amino-acid polypeptide reads, in one-letter code: Elongation factor 4 (599 aa).

The tr-type G domain maps to 2–184; the sequence is KNIRNFSIIA…RLVRDIPPPQ (183 aa). GTP-binding positions include 14–19 and 131–134; these read DHGKST and NKID.

This sequence belongs to the TRAFAC class translation factor GTPase superfamily. Classic translation factor GTPase family. LepA subfamily.

The protein resides in the cell inner membrane. It catalyses the reaction GTP + H2O = GDP + phosphate + H(+). Its function is as follows. Required for accurate and efficient protein synthesis under certain stress conditions. May act as a fidelity factor of the translation reaction, by catalyzing a one-codon backward translocation of tRNAs on improperly translocated ribosomes. Back-translocation proceeds from a post-translocation (POST) complex to a pre-translocation (PRE) complex, thus giving elongation factor G a second chance to translocate the tRNAs correctly. Binds to ribosomes in a GTP-dependent manner. The protein is Elongation factor 4 of Salmonella arizonae (strain ATCC BAA-731 / CDC346-86 / RSK2980).